The primary structure comprises 150 residues: Ribonuclease H (150 aa).

Residues 1 to 142 (MSDSVELFTD…ADQLANRGVD (142 aa)) form the RNase H type-1 domain. 4 residues coordinate Mg(2+): Asp10, Glu48, Asp70, and Asp134.

The protein belongs to the RNase H family. Monomer. Mg(2+) serves as cofactor.

It is found in the cytoplasm. It carries out the reaction Endonucleolytic cleavage to 5'-phosphomonoester.. In terms of biological role, endonuclease that specifically degrades the RNA of RNA-DNA hybrids. The protein is Ribonuclease H of Pseudomonas syringae pv. syringae (strain B728a).